The primary structure comprises 688 residues: DNA ligase (688 aa).

Residues 51 to 55 (DSEYD), 100 to 101 (SL), and Glu129 contribute to the NAD(+) site. The active-site N6-AMP-lysine intermediate is Lys131. NAD(+) is bound by residues Arg152, Glu189, Lys308, and Lys332. 4 residues coordinate Zn(2+): Cys426, Cys429, Cys444, and Cys450. Residues 609–688 (ADEQPLKGQT…DELLALLANS (80 aa)) form the BRCT domain.

The protein belongs to the NAD-dependent DNA ligase family. LigA subfamily. It depends on Mg(2+) as a cofactor. Mn(2+) serves as cofactor.

It carries out the reaction NAD(+) + (deoxyribonucleotide)n-3'-hydroxyl + 5'-phospho-(deoxyribonucleotide)m = (deoxyribonucleotide)n+m + AMP + beta-nicotinamide D-nucleotide.. Its function is as follows. DNA ligase that catalyzes the formation of phosphodiester linkages between 5'-phosphoryl and 3'-hydroxyl groups in double-stranded DNA using NAD as a coenzyme and as the energy source for the reaction. It is essential for DNA replication and repair of damaged DNA. The chain is DNA ligase from Shewanella sp. (strain MR-7).